We begin with the raw amino-acid sequence, 677 residues long: Methionine--tRNA ligase (677 aa).

Residues 15–25 carry the 'HIGH' region motif; sequence PYANGSIHLGH. The Zn(2+) site is built by cysteine 146, cysteine 149, cysteine 159, and cysteine 162. The 'KMSKS' region signature appears at 333–337; it reads KMSKS. ATP is bound at residue lysine 336. The tRNA-binding domain occupies 575 to 677; sequence DFAKVDLRVA…AGAKPGHQVK (103 aa).

The protein belongs to the class-I aminoacyl-tRNA synthetase family. MetG type 1 subfamily. As to quaternary structure, homodimer. Zn(2+) is required as a cofactor.

The protein resides in the cytoplasm. The enzyme catalyses tRNA(Met) + L-methionine + ATP = L-methionyl-tRNA(Met) + AMP + diphosphate. Is required not only for elongation of protein synthesis but also for the initiation of all mRNA translation through initiator tRNA(fMet) aminoacylation. The polypeptide is Methionine--tRNA ligase (Escherichia coli O6:K15:H31 (strain 536 / UPEC)).